We begin with the raw amino-acid sequence, 332 residues long: MAVKMIKVHGSGNDFYLLDQTQFQAPLSDADLKQLAINICKRDGAGLYDGADGVLVVDKSEHPQVLGRMRVINADGTEASMCGNGLRTVARYLGTQNSQEDFRVQTMYADLKVQAVADFAAHVPAYSVEISPVTFDAQTLGMHANNDATTIINEKIPALSADLKFSAVAVPNPHLIAFVDHDTLVGPELGRIGEWMNDGKNQIFPDGVNVSFVEVLGPNSIFVRTFERGVGFTNACGTAMSASSLMYVLLHQESTDFNQEIHVTNPGGMVKTVVHQGADEEYWMELIGNATFVRIVTLPLEDALQGDYSPVTATETGEQVAYEDFVANLAKA.

Residues asparagine 13 and asparagine 73 each coordinate substrate. Cysteine 82 (proton donor) is an active-site residue. Residues 83-84 (GN), asparagine 172, asparagine 209, and 227-228 (ER) each bind substrate. Catalysis depends on cysteine 236, which acts as the Proton acceptor. Position 237–238 (237–238 (GT)) interacts with substrate.

This sequence belongs to the diaminopimelate epimerase family. As to quaternary structure, homodimer.

It localises to the cytoplasm. It catalyses the reaction (2S,6S)-2,6-diaminopimelate = meso-2,6-diaminopimelate. Its pathway is amino-acid biosynthesis; L-lysine biosynthesis via DAP pathway; DL-2,6-diaminopimelate from LL-2,6-diaminopimelate: step 1/1. Functionally, catalyzes the stereoinversion of LL-2,6-diaminopimelate (L,L-DAP) to meso-diaminopimelate (meso-DAP), a precursor of L-lysine and an essential component of the bacterial peptidoglycan. The sequence is that of Diaminopimelate epimerase from Lactiplantibacillus plantarum (strain ATCC BAA-793 / NCIMB 8826 / WCFS1) (Lactobacillus plantarum).